A 1713-amino-acid chain; its full sequence is Cell wall protein AWA1 (1713 aa).

The signal sequence occupies residues 1–23; it reads MFNRFNKLQAALALVLYSQSALG. N-linked (GlcNAc...) asparagine glycosylation is present at Asn-34. Disordered stretches follow at residues 80–117, 256–327, and 359–939; these read IAPS…SSSS, TSTT…AESI, and SSGI…STAS. Low complexity predominate over residues 256–275; that stretch reads TSTTSDTYISSSSPSQVTSS. Composition is skewed to polar residues over residues 276–327 and 359–368; these read AEPT…AESI and SSGISSSVEP. Positions 374-939 are enriched in low complexity; the sequence is PSSDESISST…QSTSSASTAS (566 aa). N-linked (GlcNAc...) asparagine glycosylation is found at Asn-1133, Asn-1241, and Asn-1278. The interval 1582 to 1603 is disordered; that stretch reads KTVTSEAPKETSETSETSAAPK. Ala-1692 carries GPI-anchor amidated alanine lipidation. Residues 1693–1713 constitute a propeptide, removed in mature form; that stretch reads AGLNANTLNALVGIFVLAFFN.

The protein belongs to the SRP1/TIP1 family. Post-translationally, the GPI-anchor is attached to the protein in the endoplasmic reticulum and serves to target the protein to the cell surface. There, the glucosamine-inositol phospholipid moiety is cleaved off and the GPI-modified mannoprotein is covalently attached via its lipidless GPI glycan remnant to the 1,6-beta-glucan of the outer cell wall layer.

The protein resides in the secreted. It is found in the cell wall. The protein localises to the membrane. Involved in cell wall organization and biosynthesis. Confers cell surface hydrophobicity (CSH). The chain is Cell wall protein AWA1 (AWA1) from Saccharomyces cerevisiae (strain Kyokai no. 7 / NBRC 101557) (Baker's yeast).